A 267-amino-acid chain; its full sequence is Dihydropteroate synthase (267 aa).

In terms of domain architecture, Pterin-binding spans 1–251 (MTKTKIMGIL…NVELNAKLAK (251 aa)). Asparagine 11 lines the Mg(2+) pocket. (7,8-dihydropterin-6-yl)methyl diphosphate contacts are provided by residues threonine 51, aspartate 84, asparagine 103, aspartate 167, lysine 203, and 239-241 (RVH).

This sequence belongs to the DHPS family. In terms of assembly, homodimer. Requires Mg(2+) as cofactor.

It carries out the reaction (7,8-dihydropterin-6-yl)methyl diphosphate + 4-aminobenzoate = 7,8-dihydropteroate + diphosphate. The protein operates within cofactor biosynthesis; tetrahydrofolate biosynthesis; 7,8-dihydrofolate from 2-amino-4-hydroxy-6-hydroxymethyl-7,8-dihydropteridine diphosphate and 4-aminobenzoate: step 1/2. Catalyzes the condensation of para-aminobenzoate (pABA) with 6-hydroxymethyl-7,8-dihydropterin diphosphate (DHPt-PP) to form 7,8-dihydropteroate (H2Pte), the immediate precursor of folate derivatives. The polypeptide is Dihydropteroate synthase (folP) (Staphylococcus aureus (strain Mu50 / ATCC 700699)).